The chain runs to 79 residues: Small ribosomal subunit protein bS18 (79 aa).

Belongs to the bacterial ribosomal protein bS18 family. As to quaternary structure, part of the 30S ribosomal subunit. Forms a tight heterodimer with protein bS6.

In terms of biological role, binds as a heterodimer with protein bS6 to the central domain of the 16S rRNA, where it helps stabilize the platform of the 30S subunit. The protein is Small ribosomal subunit protein bS18 of Streptococcus thermophilus (strain CNRZ 1066).